The primary structure comprises 426 residues: Histidine--tRNA ligase (426 aa).

The protein belongs to the class-II aminoacyl-tRNA synthetase family. As to quaternary structure, homodimer.

The protein resides in the cytoplasm. The catalysed reaction is tRNA(His) + L-histidine + ATP = L-histidyl-tRNA(His) + AMP + diphosphate + H(+). This is Histidine--tRNA ligase from Streptococcus thermophilus (strain ATCC BAA-491 / LMD-9).